The following is an 84-amino-acid chain: Neurotoxin BM10-1-like (84 aa).

Residues 1–21 (MKTLLLTLVVVTIVCLDLGYT) form the signal peptide. Disulfide bonds link C24-C47, C27-C32, C40-C64, C68-C76, and C77-C82.

It belongs to the three-finger toxin family. Ancestral subfamily. Orphan group IV sub-subfamily. As to expression, expressed by the venom gland.

It localises to the secreted. Binds and inhibits muscular and neuronal nicotinic acetylcholine receptors (nAChR). This chain is Neurotoxin BM10-1-like, found in Bungarus multicinctus (Many-banded krait).